The primary structure comprises 512 residues: Kynurenine 3-monooxygenase (512 aa).

The protein belongs to the aromatic-ring hydroxylase family. KMO subfamily. It depends on FAD as a cofactor.

Its subcellular location is the mitochondrion outer membrane. The catalysed reaction is L-kynurenine + NADPH + O2 + H(+) = 3-hydroxy-L-kynurenine + NADP(+) + H2O. The protein operates within cofactor biosynthesis; NAD(+) biosynthesis; quinolinate from L-kynurenine: step 1/3. Functionally, catalyzes the hydroxylation of L-kynurenine (L-Kyn) to form 3-hydroxy-L-kynurenine (L-3OHKyn). Required for synthesis of quinolinic acid. The protein is Kynurenine 3-monooxygenase (bna4) of Aspergillus clavatus (strain ATCC 1007 / CBS 513.65 / DSM 816 / NCTC 3887 / NRRL 1 / QM 1276 / 107).